Consider the following 82-residue polypeptide: DNA-directed RNA polymerase subunit omega (82 aa).

This sequence belongs to the RNA polymerase subunit omega family. The RNAP catalytic core consists of 2 alpha, 1 beta, 1 beta' and 1 omega subunit. When a sigma factor is associated with the core the holoenzyme is formed, which can initiate transcription.

It catalyses the reaction RNA(n) + a ribonucleoside 5'-triphosphate = RNA(n+1) + diphosphate. In terms of biological role, promotes RNA polymerase assembly. Latches the N- and C-terminal regions of the beta' subunit thereby facilitating its interaction with the beta and alpha subunits. In Lachnoclostridium phytofermentans (strain ATCC 700394 / DSM 18823 / ISDg) (Clostridium phytofermentans), this protein is DNA-directed RNA polymerase subunit omega.